Here is a 457-residue protein sequence, read N- to C-terminus: Argininosuccinate lyase (457 aa).

This sequence belongs to the lyase 1 family. Argininosuccinate lyase subfamily.

It localises to the cytoplasm. The catalysed reaction is 2-(N(omega)-L-arginino)succinate = fumarate + L-arginine. Its pathway is amino-acid biosynthesis; L-arginine biosynthesis; L-arginine from L-ornithine and carbamoyl phosphate: step 3/3. In Klebsiella pneumoniae (strain 342), this protein is Argininosuccinate lyase.